The sequence spans 146 residues: Large ribosomal subunit protein bL21 (146 aa).

The interval 96–146 (KKKTRRKMGHRQELTRVMVKSISITNSTPKTSSKTEVKKKSTSPKASNPEN) is disordered.

Belongs to the bacterial ribosomal protein bL21 family. Part of the 50S ribosomal subunit. Contacts protein L20.

In terms of biological role, this protein binds to 23S rRNA in the presence of protein L20. The protein is Large ribosomal subunit protein bL21 of Prochlorococcus marinus subsp. pastoris (strain CCMP1986 / NIES-2087 / MED4).